The primary structure comprises 379 residues: Chaperone protein DnaJ 2 (379 aa).

The 65-residue stretch at 4–68 (DYYAVLGVRR…QKKQVYDLGG (65 aa)) folds into the J domain. A CR-type zinc finger spans residues 130–212 (GTTKDIQVDT…CAGDGRVPSR (83 aa)). The Zn(2+) site is built by C143, C146, C160, C163, C186, C189, C200, and C203. CXXCXGXG motif repeat units lie at residues 143-150 (CNTCNGEG), 160-167 (CDMCRGRG), 186-193 (CPQCQGFA), and 200-207 (CPECAGDG). The segment at 351–379 (RGEERPTGQFQPGQQGLFSRLKDAFNGRS) is disordered. Positions 358 to 367 (GQFQPGQQGL) are enriched in polar residues. The segment covering 370-379 (RLKDAFNGRS) has biased composition (basic and acidic residues).

It belongs to the DnaJ family. Homodimer. It depends on Zn(2+) as a cofactor.

Its subcellular location is the cytoplasm. Functionally, participates actively in the response to hyperosmotic and heat shock by preventing the aggregation of stress-denatured proteins and by disaggregating proteins, also in an autonomous, DnaK-independent fashion. Unfolded proteins bind initially to DnaJ; upon interaction with the DnaJ-bound protein, DnaK hydrolyzes its bound ATP, resulting in the formation of a stable complex. GrpE releases ADP from DnaK; ATP binding to DnaK triggers the release of the substrate protein, thus completing the reaction cycle. Several rounds of ATP-dependent interactions between DnaJ, DnaK and GrpE are required for fully efficient folding. Also involved, together with DnaK and GrpE, in the DNA replication of plasmids through activation of initiation proteins. This chain is Chaperone protein DnaJ 2, found in Streptomyces albus G.